Consider the following 60-residue polypeptide: Potassium channel toxin alpha-KTx 15.9 (60 aa).

The first 22 residues, M1 to G22, serve as a signal peptide directing secretion. Disulfide bonds link C30/C51, C36/C56, and C40/C58.

Belongs to the short scorpion toxin superfamily. Potassium channel inhibitor family. Alpha-KTx 15 subfamily. As to expression, expressed by the venom gland.

It localises to the secreted. Functionally, blocker of A-type voltage-gated potassium channels of cerebellar granular cells. May also inhibit Kv4/KCND when coexpressed with DPP6 or DPP10. The occlusion of the outer entry of the K(+) conducting pore is partially reversible and affects both open and closed channels. It shares the same target in rat brain than BmTX3 (AC Q8I0L5) and AmmTX3 (AC P60208). Has been shown to weakly inhibit TRPV1 channels. The sequence is that of Potassium channel toxin alpha-KTx 15.9 from Lychas mucronatus (Chinese swimming scorpion).